The sequence spans 230 residues: Ureidoacrylate amidohydrolase RutB (230 aa).

Residue D24 is the Proton acceptor of the active site. The active site involves K133. C166 acts as the Nucleophile in catalysis.

This sequence belongs to the isochorismatase family. RutB subfamily.

The catalysed reaction is (Z)-3-ureidoacrylate + H2O + H(+) = (Z)-3-aminoacrylate + NH4(+) + CO2. It catalyses the reaction (Z)-3-ureidoacrylate + H2O = (Z)-3-aminoacrylate + carbamate + H(+). The enzyme catalyses (Z)-2-methylureidoacrylate + H2O + H(+) = (Z)-2-methylaminoacrylate + NH4(+) + CO2. In terms of biological role, hydrolyzes ureidoacrylate to form aminoacrylate and carbamate. The carbamate hydrolyzes spontaneously, thereby releasing one of the nitrogen atoms of the pyrimidine ring as ammonia and one of its carbon atoms as CO2. In Escherichia coli O81 (strain ED1a), this protein is Ureidoacrylate amidohydrolase RutB.